Here is a 44-residue protein sequence, read N- to C-terminus: MRDFKTYLSVAPVLSTLSLGFFAGFLIEINRFFPDALTFPFFSF.

Residues 7–27 (YLSVAPVLSTLSLGFFAGFLI) traverse the membrane as a helical segment.

Belongs to the PsaJ family.

It localises to the plastid membrane. Its function is as follows. May help in the organization of the PsaE and PsaF subunits. This is Photosystem I reaction center subunit IX from Cuscuta obtusiflora (Peruvian dodder).